We begin with the raw amino-acid sequence, 315 residues long: Calumenin-A (315 aa).

An N-terminal signal peptide occupies residues 1-19 (MEIRPLLMCFALCVVYATS). 6 consecutive EF-hand domains span residues 68–103 (ESKN…AQKK), 104–139 (YIYD…TYLD), 151–186 (QMMA…EEYE), 188–223 (MKDI…HEDE), 229–264 (WVAT…ADYD), and 265–300 (HAEA…FVGS). Ca(2+) contacts are provided by Asp-81, Asp-83, Asp-85, Glu-92, Asp-117, Asn-119, Asp-121, Met-123, and Glu-128. An N-linked (GlcNAc...) asparagine glycan is attached at Asn-131. Ca(2+) is bound by residues Asp-164, Asn-166, Asp-168, Glu-175, Asp-201, Asn-203, Asp-205, Glu-212, Asp-242, Asn-244, Asp-246, Lys-248, Glu-253, Asp-278, Asn-280, Asp-282, Lys-284, and Glu-289. Positions 312-315 (HDEF) match the Prevents secretion from ER motif.

Belongs to the CREC family. Interacts with ggcx.

The protein localises to the endoplasmic reticulum membrane. The protein resides in the golgi apparatus. It localises to the secreted. Its subcellular location is the melanosome. It is found in the sarcoplasmic reticulum lumen. Its function is as follows. Involved in regulation of vitamin K-dependent carboxylation of multiple N-terminal glutamate residues. Seems to inhibit gamma-carboxylase ggcx. Binds 7 calcium ions with a low affinity. In Danio rerio (Zebrafish), this protein is Calumenin-A (calua).